A 174-amino-acid chain; its full sequence is ATP-dependent protease subunit HslV (174 aa).

Thr-2 is a catalytic residue. Positions 157, 160, and 163 each coordinate Na(+).

The protein belongs to the peptidase T1B family. HslV subfamily. In terms of assembly, a double ring-shaped homohexamer of HslV is capped on each side by a ring-shaped HslU homohexamer. The assembly of the HslU/HslV complex is dependent on binding of ATP.

The protein localises to the cytoplasm. The catalysed reaction is ATP-dependent cleavage of peptide bonds with broad specificity.. With respect to regulation, allosterically activated by HslU binding. In terms of biological role, protease subunit of a proteasome-like degradation complex believed to be a general protein degrading machinery. The chain is ATP-dependent protease subunit HslV from Shewanella oneidensis (strain ATCC 700550 / JCM 31522 / CIP 106686 / LMG 19005 / NCIMB 14063 / MR-1).